Reading from the N-terminus, the 244-residue chain is Phosphoadenosine 5'-phosphosulfate reductase (244 aa).

C239 acts as the Nucleophile; cysteine thiosulfonate intermediate in catalysis.

The protein belongs to the PAPS reductase family. CysH subfamily.

It is found in the cytoplasm. It carries out the reaction [thioredoxin]-disulfide + sulfite + adenosine 3',5'-bisphosphate + 2 H(+) = [thioredoxin]-dithiol + 3'-phosphoadenylyl sulfate. Its pathway is sulfur metabolism; hydrogen sulfide biosynthesis; sulfite from sulfate: step 3/3. Catalyzes the formation of sulfite from phosphoadenosine 5'-phosphosulfate (PAPS) using thioredoxin as an electron donor. The sequence is that of Phosphoadenosine 5'-phosphosulfate reductase from Klebsiella pneumoniae subsp. pneumoniae (strain ATCC 700721 / MGH 78578).